The primary structure comprises 138 residues: MSETPYYETMYILRPDIPEEEVDSHLKKYSAILEKSETEVLDSQMRGKRRLAYPIAKHKEGIYVQLSHKGNGQQVATLERAMRLSEDVIRYITVKQDGPLPTPKPTSKEDETEKEEVKPTEDKTESPAQEEKKEDSKE.

The disordered stretch occupies residues 94–138 (VKQDGPLPTPKPTSKEDETEKEEVKPTEDKTESPAQEEKKEDSKE). Residues 106–138 (TSKEDETEKEEVKPTEDKTESPAQEEKKEDSKE) are compositionally biased toward basic and acidic residues.

It belongs to the bacterial ribosomal protein bS6 family.

In terms of biological role, binds together with bS18 to 16S ribosomal RNA. The chain is Small ribosomal subunit protein bS6 from Prochlorococcus marinus (strain NATL1A).